Here is a 424-residue protein sequence, read N- to C-terminus: Circumsporozoite protein (424 aa).

The N-terminal stretch at 1 to 18 is a signal peptide; that stretch reads MMRKLAILSVSSFLFVEA. Residues 69 to 339 form a disordered region; sequence SRSLGENDDG…VKNNNNEEPS (271 aa). Residues 85 to 106 are compositionally biased toward basic and acidic residues; it reads NNREGKDEDKRDGNNEDNETLR. The tract at residues 104–111 is required for the binding to heparan sulfate proteoglycans (HSPGs) on the surface of host hepatocytes; sequence TLRKPKHK. A region I; contains the proteolytic cleavage site region spans residues 112–116; that stretch reads KLKQP. The span at 120–300 shows a compositional bias: low complexity; it reads NPDPNANPNV…PNANPNANPN (181 aa). 44 consecutive repeat copies span residues 123 to 126, 127 to 130, 131 to 134, 135 to 138, 139 to 142, 143 to 146, 147 to 150, 151 to 154, 155 to 158, 159 to 162, 163 to 166, 167 to 170, 171 to 174, 175 to 178, 179 to 182, 183 to 186, 187 to 190, 191 to 194, 195 to 198, 199 to 202, 203 to 206, 207 to 210, 211 to 214, 215 to 218, 219 to 222, 223 to 226, 227 to 230, 231 to 234, 235 to 238, 239 to 242, 243 to 246, 247 to 250, 251 to 254, 255 to 258, 259 to 262, 263 to 266, 267 to 270, 271 to 274, 275 to 278, 279 to 282, 283 to 286, 287 to 290, 291 to 294, and 295 to 298. The interval 123-298 is 44 X 4 AA tandem repeats of P-N-[AV]-[ND]; sequence PNANPNVDPN…ANPNANPNAN (176 aa). Residues 301–316 are compositionally biased toward polar residues; the sequence is KNNQGNGQGHNMPNDP. The span at 322–336 shows a compositional bias: low complexity; the sequence is ENANANNAVKNNNNE. A TSP type-1 domain is found at 349-402; that stretch reads KIQNSLSTEWSPCSVTCGNGIQVRIKPGSANKPKDELDYENDIEKKICKMEKCS. Disulfide bonds link cysteine 361/cysteine 396 and cysteine 365/cysteine 401. The O-linked (Fuc) threonine glycan is linked to threonine 364. Cysteine 401 carries GPI-anchor amidated cysteine lipidation. Residues 402–424 constitute a propeptide, removed in mature form; that stretch reads SSVFNVVNSSIGLIMVLSFLFLN.

Belongs to the plasmodium circumsporozoite protein family. During host cell invasion, proteolytically cleaved at the cell membrane in the region I by a papain-like cysteine protease of parasite origin. Cleavage is triggered by the sporozoite contact with highly sulfated heparan sulfate proteoglycans (HSPGs) present on the host hepatocyte cell surface. Cleavage exposes the TSP type-1 (TSR) domain and is required for productive invasion of host hepatocytes but not for adhesion to the host cell membrane. Cleavage is dispensable for sporozoite development in the oocyst, motility and for traversal of host and vector cells. Post-translationally, O-glycosylated; maybe by POFUT2.

It is found in the cell membrane. The protein resides in the cytoplasm. Functionally, essential sporozoite protein. In the mosquito vector, required for sporozoite development in the oocyst, migration through the vector hemolymph and entry into the vector salivary glands. In the vertebrate host, required for sporozoite migration through the host dermis and infection of host hepatocytes. Binds to highly sulfated heparan sulfate proteoglycans (HSPGs) on the surface of host hepatocytes. In the vertebrate host, binds to highly sulfated heparan sulfate proteoglycans (HSPGs) on the surface of host hepatocytes and is required for sporozoite invasion of the host hepatocytes. The chain is Circumsporozoite protein from Plasmodium falciparum (isolate t4 / Thailand).